A 475-amino-acid chain; its full sequence is Putative aldehyde dehydrogenase (475 aa).

Residues 146 to 147 and 223 to 224 each bind NAD(+); these read WN and GS. The active-site Proton acceptor is Glu-245. Leu-246 lines the NAD(+) pocket. Cys-279 functions as the Nucleophile in the catalytic mechanism. Glu-379 lines the NAD(+) pocket.

The protein belongs to the aldehyde dehydrogenase family.

It catalyses the reaction an aldehyde + NAD(+) + H2O = a carboxylate + NADH + 2 H(+). The sequence is that of Putative aldehyde dehydrogenase from Staphylococcus aureus (strain USA300).